A 309-amino-acid polypeptide reads, in one-letter code: Mitochondrial import receptor subunit TOM34 (309 aa).

TPR repeat units lie at residues 9–42 (VEEL…LQAQ), 51–84 (SVLY…VPFS), and 86–118 (KPLL…DDSV). S160 carries the post-translational modification Phosphoserine. Residues 161–189 (LPSENHKEMAKSKSKETTATKNRVPSAGD) are disordered. Positions 164 to 178 (ENHKEMAKSKSKETT) are enriched in basic and acidic residues. Position 186 is a phosphoserine (S186). TPR repeat units follow at residues 193-226 (AKVL…SNLE), 227-260 (SATY…DGKN), and 262-294 (KAFY…EPRN). Residue K197 forms a Glycyl lysine isopeptide (Lys-Gly) (interchain with G-Cter in SUMO2) linkage.

This sequence belongs to the Tom34 family. Interacts with HSP90A, VCP, ATP6V1D, KIAA0665, AMPK, and DMAP1 through its TPR repeat.

It is found in the cytoplasm. It localises to the mitochondrion outer membrane. Plays a role in the import of cytosolically synthesized preproteins into mitochondria. Binds the mature portion of precursor proteins. Interacts with cellular components, and possesses weak ATPase activity. May be a chaperone-like protein that helps to keep newly synthesized precursors in an unfolded import compatible state. This Pongo abelii (Sumatran orangutan) protein is Mitochondrial import receptor subunit TOM34 (TOMM34).